We begin with the raw amino-acid sequence, 434 residues long: Serine--tRNA ligase (434 aa).

241–243 (TAE) lines the L-serine pocket. ATP is bound at residue 272–274 (RSE). Glu295 provides a ligand contact to L-serine. An ATP-binding site is contributed by 359–362 (EISS). Ser395 contacts L-serine.

The protein belongs to the class-II aminoacyl-tRNA synthetase family. Type-1 seryl-tRNA synthetase subfamily. Homodimer. The tRNA molecule binds across the dimer.

It is found in the cytoplasm. The enzyme catalyses tRNA(Ser) + L-serine + ATP = L-seryl-tRNA(Ser) + AMP + diphosphate + H(+). It carries out the reaction tRNA(Sec) + L-serine + ATP = L-seryl-tRNA(Sec) + AMP + diphosphate + H(+). It functions in the pathway aminoacyl-tRNA biosynthesis; selenocysteinyl-tRNA(Sec) biosynthesis; L-seryl-tRNA(Sec) from L-serine and tRNA(Sec): step 1/1. In terms of biological role, catalyzes the attachment of serine to tRNA(Ser). Is also able to aminoacylate tRNA(Sec) with serine, to form the misacylated tRNA L-seryl-tRNA(Sec), which will be further converted into selenocysteinyl-tRNA(Sec). In Glaesserella parasuis serovar 5 (strain SH0165) (Haemophilus parasuis), this protein is Serine--tRNA ligase.